Consider the following 417-residue polypeptide: NADH-quinone oxidoreductase subunit D (417 aa).

Belongs to the complex I 49 kDa subunit family. As to quaternary structure, NDH-1 is composed of 14 different subunits. Subunits NuoB, C, D, E, F, and G constitute the peripheral sector of the complex.

It is found in the cell inner membrane. It carries out the reaction a quinone + NADH + 5 H(+)(in) = a quinol + NAD(+) + 4 H(+)(out). Its function is as follows. NDH-1 shuttles electrons from NADH, via FMN and iron-sulfur (Fe-S) centers, to quinones in the respiratory chain. The immediate electron acceptor for the enzyme in this species is believed to be ubiquinone. Couples the redox reaction to proton translocation (for every two electrons transferred, four hydrogen ions are translocated across the cytoplasmic membrane), and thus conserves the redox energy in a proton gradient. This is NADH-quinone oxidoreductase subunit D from Janthinobacterium sp. (strain Marseille) (Minibacterium massiliensis).